A 620-amino-acid chain; its full sequence is Chaperone protein HtpG (620 aa).

The tract at residues 1–339 is a; substrate-binding; it reads MAKHQFQTEI…SEDLPLNVSR (339 aa). Positions 340-546 are b; it reads ELLQENRILA…ASDPMAGMAA (207 aa). A c region spans residues 547–620; the sequence is MFAQMGQEMP…RVASLATKAL (74 aa).

It belongs to the heat shock protein 90 family. Homodimer.

It is found in the cytoplasm. Its function is as follows. Molecular chaperone. Has ATPase activity. The sequence is that of Chaperone protein HtpG from Sulfurovum sp. (strain NBC37-1).